We begin with the raw amino-acid sequence, 521 residues long: Probable xyloglucan galactosyltransferase GT14 (521 aa).

The Cytoplasmic portion of the chain corresponds to 1 to 30 (MRPKNYSQMEKPISITTGKFRTNNNNNHNN). A helical; Signal-anchor for type II membrane protein transmembrane segment spans residues 31–51 (VWFVVPLFFILCFVLLCFDYS). Residues 52–521 (ALFTDTDETA…SPYEEPQVLA (470 aa)) are Lumenal-facing. Positions 72–92 (TSSEFTKDDNFSRFPDDPSPD) are disordered. The span at 76-87 (FTKDDNFSRFPD) shows a compositional bias: basic and acidic residues. 6 N-linked (GlcNAc...) asparagine glycosylation sites follow: Asn81, Asn177, Asn203, Asn249, Asn265, and Asn411. The segment at 492 to 521 (RQGKDGSDGFDDRDDYKYTFSPYEEPQVLA) is disordered.

Belongs to the glycosyltransferase 47 family. Expressed in roots, hypocotyls, cotyledons, leaves, stems, stamens and carpels.

It is found in the golgi apparatus membrane. Its function is as follows. Functions in xyloglucan synthesis by adding side chains to the xylosylated glucan backbone. Involved in the galactosylation of hemicellulose xyloglucan. The sequence is that of Probable xyloglucan galactosyltransferase GT14 from Arabidopsis thaliana (Mouse-ear cress).